A 278-amino-acid chain; its full sequence is Potassium/proton antiporter CemA (278 aa).

4 helical membrane-spanning segments follow: residues 61–81, 155–175, 203–223, and 238–258; these read LIVL…FIIG, AIKN…LIVL, IILF…EVVI, and FIFL…KYWI.

The protein belongs to the CemA family.

The protein localises to the plastid. Its subcellular location is the chloroplast inner membrane. It carries out the reaction K(+)(in) + H(+)(out) = K(+)(out) + H(+)(in). Its function is as follows. Contributes to K(+)/H(+) antiport activity by supporting proton efflux to control proton extrusion and homeostasis in chloroplasts in a light-dependent manner to modulate photosynthesis. Prevents excessive induction of non-photochemical quenching (NPQ) under continuous-light conditions. Indirectly promotes efficient inorganic carbon uptake into chloroplasts. The protein is Potassium/proton antiporter CemA of Cyanidium caldarium (Red alga).